Consider the following 606-residue polypeptide: Proton myo-inositol cotransporter hmit-1.1 (606 aa).

Topologically, residues 1–20 (MVAVAAFSSSGQDKPAHTPK) are cytoplasmic. The helical transmembrane segment at 21-41 (LGLFVYILAAASVIGGFLFGY) threads the bilayer. Residues 42-63 (DTSVVSAAMLYMPDAPGLKPMD) are Extracellular-facing. Residues 64–84 (TVWQEVLVSISPGMAAVGSLM) traverse the membrane as a helical segment. At 85–96 (SGTSSDYIGRRK) the chain is on the cytoplasmic side. A helical membrane pass occupies residues 97–117 (VILGASAIFTIGALVCAASVN). Residue Lys118 is a topological domain, extracellular. The chain crosses the membrane as a helical span at residues 119-139 (IMLLVGRVLLGIAIGFASMIV). At 140–152 (PVYLGETAPTHVR) the chain is on the cytoplasmic side. Residues 153–173 (GMLVAAFALMISFGQVVANIT) form a helical membrane-spanning segment. Residues 174-188 (GGAFSYIDPYNVGWR) are Extracellular-facing. The chain crosses the membrane as a helical span at residues 189–209 (LMFAFAAVPSIIQFVCFMFLP). Over 210-278 (ETPRWLYENG…RILKTPHVLK (69 aa)) the chain is Cytoplasmic. The helical transmembrane segment at 279–299 (ACFIGSMLQAFQQLAGINTIL) threads the bilayer. At 300–317 (YYTADIIRSSGISNNHTT) the chain is on the extracellular side. Asn314 is a glycosylation site (N-linked (GlcNAc...) asparagine). The chain crosses the membrane as a helical span at residues 318-338 (IWISVLLSLCNFIGPFVPMSL). At 339–345 (IEKVGRR) the chain is on the cytoplasmic side. The chain crosses the membrane as a helical span at residues 346–366 (IIFLFSCGLVVLSLVFIGVAF). Residues 367–464 (LLVNHDSAAT…EKYYCDTKYT (98 aa)) are Extracellular-facing. 2 N-linked (GlcNAc...) asparagine glycosylation sites follow: Asn387 and Asn445. Residues 465–485 (LLPIIACGVYLLTFSSGFTSL) form a helical membrane-spanning segment. The Cytoplasmic portion of the chain corresponds to 486–501 (PWVLNSEFYPMWARST). The helical transmembrane segment at 502 to 522 (CVAISTTSNWVFNLIIALTYL) threads the bilayer. The Extracellular segment spans residues 523 to 531 (SLTQVIGKY). The helical transmembrane segment at 532-552 (GAFWLYAGLTVIAFIFILFLV) threads the bilayer. Residues 553–606 (PETKGYSIEEVEMLFMNKKQRREAESRRRETVTEVRSRMNSTVSFGQHNEVHKY) lie on the Cytoplasmic side of the membrane.

The protein belongs to the major facilitator superfamily. Sugar transporter (TC 2.A.1.1) family. Expressed in the intestine.

It localises to the cell membrane. The enzyme catalyses myo-inositol(out) + H(+)(out) = myo-inositol(in) + H(+)(in). Functionally, h(+)-myo-inositol cotransporter. Probably by promoting the transport of myo-inositol regulates intracellular osmosis in response to hyperosmotic stress. In Caenorhabditis elegans, this protein is Proton myo-inositol cotransporter hmit-1.1.